Reading from the N-terminus, the 124-residue chain is Small ribosomal subunit protein uS12 (124 aa).

Aspartate 89 carries the 3-methylthioaspartic acid modification. At lysine 108 the chain carries N6-acetyllysine.

Belongs to the universal ribosomal protein uS12 family. Part of the 30S ribosomal subunit. Contacts proteins S8 and S17. May interact with IF1 in the 30S initiation complex.

Functionally, with S4 and S5 plays an important role in translational accuracy. Interacts with and stabilizes bases of the 16S rRNA that are involved in tRNA selection in the A site and with the mRNA backbone. Located at the interface of the 30S and 50S subunits, it traverses the body of the 30S subunit contacting proteins on the other side and probably holding the rRNA structure together. The combined cluster of proteins S8, S12 and S17 appears to hold together the shoulder and platform of the 30S subunit. The protein is Small ribosomal subunit protein uS12 of Escherichia coli O139:H28 (strain E24377A / ETEC).